The chain runs to 161 residues: Regulator of ribonuclease activity A (161 aa).

The protein belongs to the RraA family. In terms of assembly, homotrimer. Binds to both RNA-binding sites in the C-terminal region of Rne and to RhlB.

It is found in the cytoplasm. Functionally, globally modulates RNA abundance by binding to RNase E (Rne) and regulating its endonucleolytic activity. Can modulate Rne action in a substrate-dependent manner by altering the composition of the degradosome. Modulates RNA-binding and helicase activities of the degradosome. The protein is Regulator of ribonuclease activity A of Idiomarina loihiensis (strain ATCC BAA-735 / DSM 15497 / L2-TR).